The following is a 376-amino-acid chain: 26S proteasome non-ATPase regulatory subunit 13 (376 aa).

The region spanning 171–338 (SYYKDALRFL…KRVHMTWVQP (168 aa)) is the PCI domain.

The protein belongs to the proteasome subunit S11 family. Component of the 19S proteasome regulatory particle complex. The 26S proteasome consists of a 20S core particle (CP) and two 19S regulatory subunits (RP). The regulatory particle is made of a lid composed of 9 subunits including PSMD13, a base containing 6 ATPases and few additional components.

Component of the 26S proteasome, a multiprotein complex involved in the ATP-dependent degradation of ubiquitinated proteins. This complex plays a key role in the maintenance of protein homeostasis by removing misfolded or damaged proteins, which could impair cellular functions, and by removing proteins whose functions are no longer required. Therefore, the proteasome participates in numerous cellular processes, including cell cycle progression, apoptosis, or DNA damage repair. This Bos taurus (Bovine) protein is 26S proteasome non-ATPase regulatory subunit 13 (PSMD13).